The sequence spans 280 residues: Urease accessory protein UreD 1 (280 aa).

The protein belongs to the UreD family. In terms of assembly, ureD, UreF and UreG form a complex that acts as a GTP-hydrolysis-dependent molecular chaperone, activating the urease apoprotein by helping to assemble the nickel containing metallocenter of UreC. The UreE protein probably delivers the nickel.

Its subcellular location is the cytoplasm. Its function is as follows. Required for maturation of urease via the functional incorporation of the urease nickel metallocenter. The protein is Urease accessory protein UreD 1 of Bradyrhizobium sp. (strain BTAi1 / ATCC BAA-1182).